The chain runs to 489 residues: Adenylosuccinate synthetase 2, chloroplastic (489 aa).

Residues 1–45 (MPFSPPCLDPAAAAAASLSFLPAAAARPPAPCAVAPRSRRALRVA) constitute a chloroplast transit peptide. GTP is bound by residues 76–82 (GDEGKGK) and 104–106 (GHT). Asp77 serves as the catalytic Proton acceptor. The Mg(2+) site is built by Asp77 and Gly104. IMP-binding positions include 77-80 (DEGK), 102-105 (NAGH), Thr194, Arg208, Gln288, Thr303, and Arg367. His105 (proton donor) is an active-site residue. 363–369 (TTTGRPR) provides a ligand contact to substrate. Residues Arg369, 395 to 397 (KLD), and 478 to 480 (GVG) each bind GTP.

This sequence belongs to the adenylosuccinate synthetase family. Homodimer. Mg(2+) serves as cofactor.

Its subcellular location is the plastid. It is found in the chloroplast. The catalysed reaction is IMP + L-aspartate + GTP = N(6)-(1,2-dicarboxyethyl)-AMP + GDP + phosphate + 2 H(+). The protein operates within purine metabolism; AMP biosynthesis via de novo pathway; AMP from IMP: step 1/2. Plays an important role in the de novo pathway and in the salvage pathway of purine nucleotide biosynthesis. Catalyzes the first committed step in the biosynthesis of AMP from IMP. The chain is Adenylosuccinate synthetase 2, chloroplastic from Oryza sativa subsp. japonica (Rice).